The primary structure comprises 307 residues: Yop proteins translocation protein Q (307 aa).

Belongs to the FliN/MopA/SpaO family.

Its function is as follows. Component of the Yop secretion machinery. In Yersinia pestis, this protein is Yop proteins translocation protein Q (yscQ).